The primary structure comprises 135 residues: Large ribosomal subunit protein uL15 (135 aa).

Residues 21–66 form a disordered region; the sequence is VGRGQGSGMGKTATRGGKGQTARTGYKAKRGFEGGQQPLQRRLPKI.

The protein belongs to the universal ribosomal protein uL15 family. In terms of assembly, part of the 50S ribosomal subunit.

Its function is as follows. Binds to the 23S rRNA. The protein is Large ribosomal subunit protein uL15 of Helicobacter pylori (strain HPAG1).